The chain runs to 101 residues: Large ribosomal subunit protein uL23 (101 aa).

Belongs to the universal ribosomal protein uL23 family. Part of the 50S ribosomal subunit. Contacts protein L29, and trigger factor when it is bound to the ribosome.

Its function is as follows. One of the early assembly proteins it binds 23S rRNA. One of the proteins that surrounds the polypeptide exit tunnel on the outside of the ribosome. Forms the main docking site for trigger factor binding to the ribosome. The protein is Large ribosomal subunit protein uL23 of Corynebacterium kroppenstedtii (strain DSM 44385 / JCM 11950 / CIP 105744 / CCUG 35717).